The chain runs to 305 residues: tRNA dimethylallyltransferase (305 aa).

11–18 (GPTAVGKT) serves as a coordination point for ATP. Position 13 to 18 (13 to 18 (TAVGKT)) interacts with substrate. The tract at residues 36-39 (DSMQ) is interaction with substrate tRNA.

It belongs to the IPP transferase family. In terms of assembly, monomer. Mg(2+) serves as cofactor.

It carries out the reaction adenosine(37) in tRNA + dimethylallyl diphosphate = N(6)-dimethylallyladenosine(37) in tRNA + diphosphate. Its function is as follows. Catalyzes the transfer of a dimethylallyl group onto the adenine at position 37 in tRNAs that read codons beginning with uridine, leading to the formation of N6-(dimethylallyl)adenosine (i(6)A). This chain is tRNA dimethylallyltransferase, found in Listeria monocytogenes serotype 4b (strain CLIP80459).